The following is a 235-amino-acid chain: MLQITPIPALSDNYIWILQKECQAIIVDPAEAQAVFAFLAKHQLNPTAILLTHNHHDHTDGVAGLVAQFPDMLIYGSEEVSQFANQIVYPEQQFELLGLKVRVIESAGHTAQHISYLVDNEYLFCGDALFSGGCGRVFTGDYQAQFDALQRFKALPDFVKVYAGHEYTQSNLKFAEAVMATSCSLMEHQERADILRSQHKPTLPSTIGVEKQINPFMQAVTLDEFIILRQKKDNF.

Residues H53, H55, D57, H58, H109, D127, and H165 each contribute to the Zn(2+) site.

This sequence belongs to the metallo-beta-lactamase superfamily. Glyoxalase II family. In terms of assembly, monomer. Zn(2+) serves as cofactor.

The enzyme catalyses an S-(2-hydroxyacyl)glutathione + H2O = a 2-hydroxy carboxylate + glutathione + H(+). It functions in the pathway secondary metabolite metabolism; methylglyoxal degradation; (R)-lactate from methylglyoxal: step 2/2. Functionally, thiolesterase that catalyzes the hydrolysis of S-D-lactoyl-glutathione to form glutathione and D-lactic acid. The chain is Hydroxyacylglutathione hydrolase from Glaesserella parasuis serovar 5 (strain SH0165) (Haemophilus parasuis).